Consider the following 454-residue polypeptide: Aquaglyceroporin-9 (454 aa).

Residues M1–E186 lie on the Cytoplasmic side of the membrane. Residues F187–S207 traverse the membrane as a helical segment. Topologically, residues S208–S216 are extracellular. A helical membrane pass occupies residues I217 to A237. Topologically, residues H238–K257 are cytoplasmic. Positions N240–A242 match the NPA 1 motif. Residues F258 to A278 traverse the membrane as a helical segment. Over N279–K316 the chain is Extracellular. An N-linked (GlcNAc...) asparagine glycan is attached at N299. The helical transmembrane segment at T317–L337 threads the bilayer. Residues Q338 to L351 lie on the Cytoplasmic side of the membrane. Residues G352 to I372 form a helical membrane-spanning segment. The NPA 2 motif lies at N373–A375. The Extracellular portion of the chain corresponds to N373–V403. Residues P404–F424 form a helical membrane-spanning segment. The Cytoplasmic segment spans residues T425–V454.

Belongs to the MIP/aquaporin (TC 1.A.8) family.

The protein resides in the membrane. It catalyses the reaction H2O(in) = H2O(out). The catalysed reaction is glycerol(in) = glycerol(out). Water channel required to facilitate the transport of water across membranes. May play a role in the vegetative growth and pathogenicity. This Botryotinia fuckeliana (strain B05.10) (Noble rot fungus) protein is Aquaglyceroporin-9.